Here is a 966-residue protein sequence, read N- to C-terminus: uncharacterized protein (966 aa).

The signal sequence occupies residues 1-24 (MQGNLLKVLGVLAIVATLVCFIFA). The next 6 membrane-spanning stretches (helical) occupy residues 601–621 (IKAILILYVMTYGAMFLLGFA), 711–731 (LGLSGIIYFIITFIAVCIVII), 743–763 (AFMATCILIGIAPLFISFLLF), 785–805 (VVMMAGIIVLTQLFTIYLDFV), 822–842 (FIGTILPIALLNVPIFCINWF), and 855–875 (GVNMQNIVALVIIAYGMYGYV). Residues 918-966 (TRQGITGRAEARLKQRNKTLDQAEKNRKNTQKEGGEKTNEEPPKPETPK) form a disordered region. The span at 926-966 (AEARLKQRNKTLDQAEKNRKNTQKEGGEKTNEEPPKPETPK) shows a compositional bias: basic and acidic residues.

This sequence belongs to the TrbL/VirB6 family.

It localises to the cell membrane. This is an uncharacterized protein from Rickettsia conorii (strain ATCC VR-613 / Malish 7).